The primary structure comprises 96 residues: MSLRPLHDRVIVKRIESETTTASGIVIPDNAAEKPDQGVVLAVGPGKKNDKGELSVLSVKVGDRVLFGKYSGQTVKVNGDELLVMKEDDLFAVVEK.

It belongs to the GroES chaperonin family. In terms of assembly, heptamer of 7 subunits arranged in a ring. Interacts with the chaperonin GroEL.

Its subcellular location is the cytoplasm. Together with the chaperonin GroEL, plays an essential role in assisting protein folding. The GroEL-GroES system forms a nano-cage that allows encapsulation of the non-native substrate proteins and provides a physical environment optimized to promote and accelerate protein folding. GroES binds to the apical surface of the GroEL ring, thereby capping the opening of the GroEL channel. The chain is Co-chaperonin GroES from Paracidovorax citrulli (strain AAC00-1) (Acidovorax citrulli).